Consider the following 1145-residue polypeptide: Error-prone DNA polymerase (1145 aa).

Belongs to the DNA polymerase type-C family. DnaE2 subfamily.

It localises to the cytoplasm. It catalyses the reaction DNA(n) + a 2'-deoxyribonucleoside 5'-triphosphate = DNA(n+1) + diphosphate. DNA polymerase involved in damage-induced mutagenesis and translesion synthesis (TLS). It is not the major replicative DNA polymerase. In Rhodopirellula baltica (strain DSM 10527 / NCIMB 13988 / SH1), this protein is Error-prone DNA polymerase.